The sequence spans 671 residues: Probable potassium transport system protein Kup 2 (671 aa).

12 consecutive transmembrane segments (helical) span residues 12 to 32 (FAGL…SPLY), 56 to 76 (ISLI…MIAL), 99 to 119 (WLVI…TLTP), 139 to 159 (IPVP…VILF), 172 to 192 (AFGP…IANL), 218 to 238 (VGIL…ALYS), 251 to 271 (SWPY…AWIL), 296 to 316 (LFAI…LITG), 345 to 365 (IYIP…VFLF), 374 to 394 (AYGL…FEYL), 400 to 420 (PLYL…MFLI), and 429 to 449 (GGYV…VWFY).

This sequence belongs to the HAK/KUP transporter (TC 2.A.72) family.

The protein localises to the cell membrane. The catalysed reaction is K(+)(in) + H(+)(in) = K(+)(out) + H(+)(out). In terms of biological role, transport of potassium into the cell. Likely operates as a K(+):H(+) symporter. This chain is Probable potassium transport system protein Kup 2, found in Lactobacillus acidophilus (strain ATCC 700396 / NCK56 / N2 / NCFM).